A 209-amino-acid polypeptide reads, in one-letter code: COP9 signalosome complex subunit 8 (209 aa).

The PCI domain occupies 8–179; it reads ESAFSFKKLL…GALDVSFNKF (172 aa). Position 175 is a phosphoserine (S175).

This sequence belongs to the CSN8 family. Component of the CSN complex, composed of COPS1/GPS1, COPS2, COPS3, COPS4, COPS5, COPS6, COPS7 (COPS7A or COPS7B), COPS8 and COPS9. In the complex, it probably interacts directly with COPS3, COPS4 and COPS7 (COPS7A or COPS7B).

It localises to the cytoplasm. The protein localises to the nucleus. In terms of biological role, component of the COP9 signalosome complex (CSN), a complex involved in various cellular and developmental processes. The CSN complex is an essential regulator of the ubiquitin (Ubl) conjugation pathway by mediating the deneddylation of the cullin subunits of SCF-type E3 ligase complexes, leading to decrease the Ubl ligase activity of SCF-type complexes such as SCF, CSA or DDB2. The complex is also involved in phosphorylation of p53/TP53, c-jun/JUN, IkappaBalpha/NFKBIA, ITPK1 and IRF8/ICSBP, possibly via its association with CK2 and PKD kinases. CSN-dependent phosphorylation of TP53 and JUN promotes and protects degradation by the Ubl system, respectively. This chain is COP9 signalosome complex subunit 8 (COPS8), found in Pongo abelii (Sumatran orangutan).